We begin with the raw amino-acid sequence, 180 residues long: ATP-dependent protease subunit HslV (180 aa).

T5 is an active-site residue. Na(+) contacts are provided by G165, C168, and T171.

This sequence belongs to the peptidase T1B family. HslV subfamily. A double ring-shaped homohexamer of HslV is capped on each side by a ring-shaped HslU homohexamer. The assembly of the HslU/HslV complex is dependent on binding of ATP.

The protein localises to the cytoplasm. The catalysed reaction is ATP-dependent cleavage of peptide bonds with broad specificity.. Its activity is regulated as follows. Allosterically activated by HslU binding. In terms of biological role, protease subunit of a proteasome-like degradation complex believed to be a general protein degrading machinery. This Helicobacter acinonychis (strain Sheeba) protein is ATP-dependent protease subunit HslV.